Here is a 101-residue protein sequence, read N- to C-terminus: Small ribosomal subunit protein uS10 (101 aa).

It belongs to the universal ribosomal protein uS10 family. Part of the 30S ribosomal subunit.

Functionally, involved in the binding of tRNA to the ribosomes. In Anaeromyxobacter dehalogenans (strain 2CP-C), this protein is Small ribosomal subunit protein uS10.